An 80-amino-acid chain; its full sequence is Small ribosomal subunit protein bS18 (80 aa).

Belongs to the bacterial ribosomal protein bS18 family. As to quaternary structure, part of the 30S ribosomal subunit. Forms a tight heterodimer with protein bS6.

Its function is as follows. Binds as a heterodimer with protein bS6 to the central domain of the 16S rRNA, where it helps stabilize the platform of the 30S subunit. The sequence is that of Small ribosomal subunit protein bS18 from Staphylococcus carnosus (strain TM300).